Here is a 506-residue protein sequence, read N- to C-terminus: Xaa-Pro aminopeptidase 3 (506 aa).

Residues 1–31 (MLSLLSTPRLVPVIARLRGLSGCMSCLQRRY) constitute a mitochondrion transit peptide. The interval 54 to 79 (HPHLLRPGEVTPGLSQVEYALRRHKL) is interaction with TNFRSF1B. Substrate-binding residues include tyrosine 300, aspartate 331, aspartate 342, histidine 423, histidine 430, glutamate 450, and glutamate 474. Mn(2+) contacts are provided by aspartate 331, aspartate 342, and histidine 423. The Mn(2+) site is built by glutamate 450 and glutamate 474.

This sequence belongs to the peptidase M24B family. Homodimer. Interacts with TNFRSF1B/TNFR2 (activated) and TRAF2. Requires Mn(2+) as cofactor. As to expression, expressed in the kidney, specifically in intercalated cells, but not in principal cells, of the distal convoluted tubule and cortical collecting duct (at protein level).

The protein resides in the mitochondrion. It is found in the cytoplasm. It carries out the reaction Release of any N-terminal amino acid, including proline, that is linked to proline, even from a dipeptide or tripeptide.. In terms of biological role, catalyzes the removal of a penultimate prolyl residue from the N-termini of peptides, such as Leu-Pro-Ala. Also shows low activity towards peptides with Ala or Ser at the P1 position. Promotes TNFRSF1B-mediated phosphorylation of MAPK8/JNK1 and MAPK9/JNK2, suggesting a function as an adapter protein for TNFRSF1B; the effect is independent of XPNPEP3 peptidase activity. May inhibit apoptotic cell death induced via TNF-TNFRSF1B signaling. The chain is Xaa-Pro aminopeptidase 3 (Xpnpep3) from Rattus norvegicus (Rat).